Consider the following 147-residue polypeptide: UPF0306 protein YhbP (147 aa).

It belongs to the UPF0306 family.

This Escherichia coli (strain K12 / MC4100 / BW2952) protein is UPF0306 protein YhbP.